Reading from the N-terminus, the 349-residue chain is D-arabinitol dehydrogenase 1 (349 aa).

Residues Cys-46, His-67, Cys-97, Cys-100, Cys-103, Cys-111, and Glu-151 each coordinate Zn(2+).

The protein belongs to the zinc-containing alcohol dehydrogenase family. Zn(2+) serves as cofactor.

The protein localises to the cell projection. It catalyses the reaction D-arabinitol + NADP(+) = D-xylulose + NADPH + H(+). The enzyme catalyses D-arabinitol + NADP(+) = D-ribulose + NADPH + H(+). Its function is as follows. D-arabinitol dehydrogenase which mostly produces D-arabinitol in haustoria, the appendages of the parasitic fungus that penetrate the host's tissue and draws nutrients from it. D-arabinitol accumulation may serve as a carbohydrate storage compound. D-arabinitol is also capable of quenching reactive oxygen species involved in host plant defense reactions, thus providing protection for the rust fungus during the pathogenic interaction. The protein is D-arabinitol dehydrogenase 1 (ARD1) of Uromyces fabae (Rust fungus).